Here is a 131-residue protein sequence, read N- to C-terminus: Glycine cleavage system H protein (131 aa).

The Lipoyl-binding domain occupies 24–106 (TVTIGITDHA…YEDGWIIKLK (83 aa)). Position 65 is an N6-lipoyllysine (Lys65).

It belongs to the GcvH family. In terms of assembly, the glycine cleavage system is composed of four proteins: P, T, L and H. (R)-lipoate serves as cofactor.

Its function is as follows. The glycine cleavage system catalyzes the degradation of glycine. The H protein shuttles the methylamine group of glycine from the P protein to the T protein. This chain is Glycine cleavage system H protein, found in Chromohalobacter salexigens (strain ATCC BAA-138 / DSM 3043 / CIP 106854 / NCIMB 13768 / 1H11).